Here is a 548-residue protein sequence, read N- to C-terminus: Undecaprenyl phosphate-alpha-4-amino-4-deoxy-L-arabinose arabinosyl transferase 1 (548 aa).

The next 12 membrane-spanning stretches (helical) occupy residues 11–31, 89–109, 114–134, 137–157, 180–200, 214–234, 263–283, 292–312, 314–334, 347–367, 382–402, and 405–425; these read WLLF…TRLL, IVVV…AMVV, ALAF…AIGT, ILDP…LVAL, FLTK…VMAI, IALL…ALQA, FYIP…FGAL, GTLY…ASKG, LLTY…HYIE, VNAS…IYSL, KIVL…GALF, and TQFL…YAIP.

Belongs to the glycosyltransferase 83 family.

It is found in the cell inner membrane. It catalyses the reaction 4-amino-4-deoxy-alpha-L-arabinopyranosyl di-trans,octa-cis-undecaprenyl phosphate + lipid IVA = lipid IIA + di-trans,octa-cis-undecaprenyl phosphate.. It participates in lipopolysaccharide metabolism; 4-amino-4-deoxy-beta-L-arabinose-lipid A biosynthesis. Functionally, catalyzes the transfer of the L-Ara4N moiety of the glycolipid undecaprenyl phosphate-alpha-L-Ara4N to lipid A. The modified arabinose is attached to lipid A and is required for resistance to polymyxin and cationic antimicrobial peptides. This is Undecaprenyl phosphate-alpha-4-amino-4-deoxy-L-arabinose arabinosyl transferase 1 from Proteus mirabilis (strain HI4320).